A 107-amino-acid chain; its full sequence is Heme-degrading monooxygenase (107 aa).

The ABM domain occupies 2 to 94 (IIVTNTAKIT…YILDNKITYY (93 aa)). Residue Asn-6 participates in Fe cation binding. His-76 contacts heme.

This sequence belongs to the antibiotic biosynthesis monooxygenase family. Heme-degrading monooxygenase IsdG subfamily. As to quaternary structure, homodimer.

Its subcellular location is the cytoplasm. The catalysed reaction is heme b + 3 reduced [NADPH--hemoprotein reductase] + 3 O2 = biliverdin IXalpha + CO + Fe(2+) + 3 oxidized [NADPH--hemoprotein reductase] + 3 H2O + H(+). In terms of biological role, allows bacterial pathogens to use the host heme as an iron source. Catalyzes the oxidative degradation of the heme macrocyclic porphyrin ring to the biliverdin in the presence of a suitable electron donor such as ascorbate or NADPH--cytochrome P450 reductase, with subsequent release of free iron. In Bacillus thuringiensis subsp. konkukian (strain 97-27), this protein is Heme-degrading monooxygenase.